Consider the following 132-residue polypeptide: Small ribosomal subunit protein uS8 (132 aa).

The protein belongs to the universal ribosomal protein uS8 family. In terms of assembly, part of the 30S ribosomal subunit. Contacts proteins S5 and S12.

Its function is as follows. One of the primary rRNA binding proteins, it binds directly to 16S rRNA central domain where it helps coordinate assembly of the platform of the 30S subunit. The polypeptide is Small ribosomal subunit protein uS8 (Azorhizobium caulinodans (strain ATCC 43989 / DSM 5975 / JCM 20966 / LMG 6465 / NBRC 14845 / NCIMB 13405 / ORS 571)).